A 2145-amino-acid polypeptide reads, in one-letter code: Glutamate synthase [NADH] (2145 aa).

The propeptide occupies 1–53 (MPVLKSDNFDPLEEAYEGGTIQNYNDEHHLHKSWANVIPDKRGLYDPDYEHDA). The For GATase activity role is filled by cysteine 54. Residues 54-455 (CGVGFVANKH…PGDLFLVDTQ (402 aa)) enclose the Glutamine amidotransferase type-2 domain. FMN is bound at residue 1132 to 1189 (LAETHQTLVLNDLRRNVVVQTDGQLRTGFDIAVAVLLGAESFTLATVPLIAMGCVMLR). The [3Fe-4S] cluster site is built by cysteine 1185, cysteine 1191, and cysteine 1196. Positions 1551–1600 (KKVLLKEKAEAAKAKAKATSEYLKKFRSNQEVDDEVNTLLIANQKAKEQE) form a coiled coil. NAD(+) is bound at residue 1928–1942 (GGGDTGNDCLGTSVR). Threonine 2070 carries the post-translational modification Phosphothreonine.

It belongs to the glutamate synthase family. As to quaternary structure, homotrimer. It depends on [3Fe-4S] cluster as a cofactor. FAD serves as cofactor. FMN is required as a cofactor.

The enzyme catalyses 2 L-glutamate + NAD(+) = L-glutamine + 2-oxoglutarate + NADH + H(+). It participates in amino-acid biosynthesis; L-glutamate biosynthesis via GLT pathway; L-glutamate from 2-oxoglutarate and L-glutamine (NAD(+) route): step 1/1. Its pathway is energy metabolism; nitrogen metabolism. Its activity is regulated as follows. Inhibited by homocysteine sulfonamide. Functionally, forms L-glutamate from L-glutamine and 2-oxoglutarate. Represents an alternative pathway to L-glutamate dehydrogenase for the biosynthesis of L-glutamate. Participates with glutamine synthetase in ammonia assimilation processes. The enzyme is specific for NADH, L-glutamine and 2-oxoglutarate. This chain is Glutamate synthase [NADH] (GLT1), found in Saccharomyces cerevisiae (strain ATCC 204508 / S288c) (Baker's yeast).